The chain runs to 706 residues: Translation initiation factor IF-2 (706 aa).

Positions 55-117 are disordered; that stretch reads KEVNSDSNQE…PTMKDEKGLI (63 aa). Residues 67 to 81 are compositionally biased toward basic and acidic residues; it reads VNTDDKLDKIDKPNK. Over residues 93 to 108 the composition is skewed to basic residues; that stretch reads KNKKSKKKQKNKKKGP. In terms of domain architecture, tr-type G spans 208–375; that stretch reads SRPPVVTVMG…MILLVSEVEE (168 aa). The G1 stretch occupies residues 217 to 224; it reads GHVDHGKT. A GTP-binding site is contributed by 217–224; the sequence is GHVDHGKT. The interval 242-246 is G2; the sequence is GITQH. A G3 region spans residues 263–266; that stretch reads DTPG. GTP-binding positions include 263–267 and 317–320; these read DTPGH and NKID. A G4 region spans residues 317-320; that stretch reads NKID. The tract at residues 353–355 is G5; that stretch reads SAI.

It belongs to the TRAFAC class translation factor GTPase superfamily. Classic translation factor GTPase family. IF-2 subfamily.

The protein localises to the cytoplasm. Functionally, one of the essential components for the initiation of protein synthesis. Protects formylmethionyl-tRNA from spontaneous hydrolysis and promotes its binding to the 30S ribosomal subunits. Also involved in the hydrolysis of GTP during the formation of the 70S ribosomal complex. In Alkaliphilus metalliredigens (strain QYMF), this protein is Translation initiation factor IF-2.